A 118-amino-acid polypeptide reads, in one-letter code: 5-hydroxyisourate hydrolase (118 aa).

3 residues coordinate substrate: His-7, Arg-46, and Tyr-115.

It belongs to the transthyretin family. 5-hydroxyisourate hydrolase subfamily. Homotetramer.

It carries out the reaction 5-hydroxyisourate + H2O = 5-hydroxy-2-oxo-4-ureido-2,5-dihydro-1H-imidazole-5-carboxylate + H(+). Its function is as follows. Catalyzes the hydrolysis of 5-hydroxyisourate (HIU) to 2-oxo-4-hydroxy-4-carboxy-5-ureidoimidazoline (OHCU). This is 5-hydroxyisourate hydrolase from Brucella suis biovar 1 (strain 1330).